The primary structure comprises 270 residues: Flavodoxin/ferredoxin--NADP reductase (270 aa).

An FAD-binding FR-type domain is found at 12–113 (VLPDAQTVTS…PKPVGTLVID (102 aa)). FAD-binding positions include 62-65 (RAYS), 78-80 (YSI), and 86-88 (PLT). T126 contributes to the NADP(+) binding site. Residue T128 participates in FAD binding. Residues R156, 192–193 (TR), R201, and D238 each bind NADP(+). 264–270 (AFVGEGI) is an FAD binding site.

The protein belongs to the ferredoxin--NADP reductase type 1 family. As to quaternary structure, monomer. It depends on FAD as a cofactor.

The protein localises to the cytoplasm. It carries out the reaction 2 reduced [2Fe-2S]-[ferredoxin] + NADP(+) + H(+) = 2 oxidized [2Fe-2S]-[ferredoxin] + NADPH. The enzyme catalyses reduced [flavodoxin] + NADP(+) = oxidized [flavodoxin] + NADPH + 2 H(+). Its function is as follows. Transports electrons between flavodoxin or ferredoxin and NADPH. The protein is Flavodoxin/ferredoxin--NADP reductase of Rhodobacter capsulatus (Rhodopseudomonas capsulata).